A 633-amino-acid polypeptide reads, in one-letter code: Chaperone protein HtpG (633 aa).

Positions 1 to 344 (MSLQPQAETL…SNDLPLNISR (344 aa)) are a; substrate-binding. A b region spans residues 345-560 (ELLQSNEVIN…ENEMSGHLQR (216 aa)). The segment at 561-633 (LLIQTGQDFM…KGLNELLLDS (73 aa)) is c.

This sequence belongs to the heat shock protein 90 family. Homodimer.

It is found in the cytoplasm. In terms of biological role, molecular chaperone. Has ATPase activity. This is Chaperone protein HtpG from Coxiella burnetii (strain RSA 493 / Nine Mile phase I).